A 91-amino-acid polypeptide reads, in one-letter code: Lactococcin-B immunity protein (91 aa).

Functionally, imparts immunity to lactococcin-B to naturally sensitive host strains. In Lactococcus lactis subsp. cremoris (Streptococcus cremoris), this protein is Lactococcin-B immunity protein (lciB).